The sequence spans 343 residues: L-threonine 3-dehydrogenase (343 aa).

A Zn(2+)-binding site is contributed by Cys-40. Catalysis depends on charge relay system residues Thr-42 and His-45. The Zn(2+) site is built by His-65, Glu-66, Cys-95, Cys-98, Cys-101, and Cys-109. NAD(+) contacts are provided by residues Ile-177, Asp-197, Arg-202, 264-266 (LGI), and 288-289 (IY).

The protein belongs to the zinc-containing alcohol dehydrogenase family. Homotetramer. The cofactor is Zn(2+).

Its subcellular location is the cytoplasm. The enzyme catalyses L-threonine + NAD(+) = (2S)-2-amino-3-oxobutanoate + NADH + H(+). Its pathway is amino-acid degradation; L-threonine degradation via oxydo-reductase pathway; glycine from L-threonine: step 1/2. Catalyzes the NAD(+)-dependent oxidation of L-threonine to 2-amino-3-ketobutyrate. In Vibrio atlanticus (strain LGP32) (Vibrio splendidus (strain Mel32)), this protein is L-threonine 3-dehydrogenase.